The sequence spans 252 residues: dITP/XTP pyrophosphatase (252 aa).

Position 7-12 (7-12) interacts with substrate; it reads THNEGK. The active-site Proton acceptor is aspartate 74. Aspartate 74 is a binding site for Mg(2+). Substrate is bound by residues serine 75 and 193–196; that span reads FGYD. The disordered stretch occupies residues 201 to 224; it reads PDDQPAGRVSTEPDHEGEPLTSAE. Residues lysine 230 and 235-236 contribute to the substrate site; that span reads HR.

The protein belongs to the HAM1 NTPase family. As to quaternary structure, homodimer. Requires Mg(2+) as cofactor.

The catalysed reaction is XTP + H2O = XMP + diphosphate + H(+). It carries out the reaction dITP + H2O = dIMP + diphosphate + H(+). It catalyses the reaction ITP + H2O = IMP + diphosphate + H(+). Its function is as follows. Pyrophosphatase that catalyzes the hydrolysis of nucleoside triphosphates to their monophosphate derivatives, with a high preference for the non-canonical purine nucleotides XTP (xanthosine triphosphate), dITP (deoxyinosine triphosphate) and ITP. Seems to function as a house-cleaning enzyme that removes non-canonical purine nucleotides from the nucleotide pool, thus preventing their incorporation into DNA/RNA and avoiding chromosomal lesions. This chain is dITP/XTP pyrophosphatase, found in Bifidobacterium longum subsp. infantis (strain ATCC 15697 / DSM 20088 / JCM 1222 / NCTC 11817 / S12).